Reading from the N-terminus, the 304-residue chain is Agmatinase (304 aa).

The Mn(2+) site is built by His126, Asp149, His151, Asp153, Asp230, and Asp232.

It belongs to the arginase family. Agmatinase subfamily. Requires Mn(2+) as cofactor.

The catalysed reaction is agmatine + H2O = urea + putrescine. Its pathway is amine and polyamine biosynthesis; putrescine biosynthesis via agmatine pathway; putrescine from agmatine: step 1/1. Functionally, catalyzes the formation of putrescine from agmatine. This chain is Agmatinase, found in Edwardsiella ictaluri (strain 93-146).